The sequence spans 468 residues: 6-phosphogluconate dehydrogenase, decarboxylating (468 aa).

Residues 9–14, 32–34, 73–75, and N101 each bind NADP(+); these read GLAVMG, NRS, and VQA. Residues N101 and 127 to 129 each bind substrate; that span reads SGG. Catalysis depends on K182, which acts as the Proton acceptor. 185 to 186 provides a ligand contact to substrate; that stretch reads HN. E189 (proton donor) is an active-site residue. Positions 190, 259, 286, 444, and 450 each coordinate substrate.

It belongs to the 6-phosphogluconate dehydrogenase family. Homodimer.

The enzyme catalyses 6-phospho-D-gluconate + NADP(+) = D-ribulose 5-phosphate + CO2 + NADPH. It participates in carbohydrate degradation; pentose phosphate pathway; D-ribulose 5-phosphate from D-glucose 6-phosphate (oxidative stage): step 3/3. Catalyzes the oxidative decarboxylation of 6-phosphogluconate to ribulose 5-phosphate and CO(2), with concomitant reduction of NADP to NADPH. This Staphylococcus aureus (strain COL) protein is 6-phosphogluconate dehydrogenase, decarboxylating (gnd).